We begin with the raw amino-acid sequence, 217 residues long: Large ribosomal subunit protein uL3 (217 aa).

An N5-methylglutamine modification is found at glutamine 154.

The protein belongs to the universal ribosomal protein uL3 family. As to quaternary structure, part of the 50S ribosomal subunit. Forms a cluster with proteins L14 and L19. Methylated by PrmB.

One of the primary rRNA binding proteins, it binds directly near the 3'-end of the 23S rRNA, where it nucleates assembly of the 50S subunit. The protein is Large ribosomal subunit protein uL3 of Burkholderia ambifaria (strain ATCC BAA-244 / DSM 16087 / CCUG 44356 / LMG 19182 / AMMD) (Burkholderia cepacia (strain AMMD)).